A 246-amino-acid polypeptide reads, in one-letter code: tRNA pseudouridine synthase A (246 aa).

D52 serves as the catalytic Nucleophile. Y111 lines the substrate pocket.

This sequence belongs to the tRNA pseudouridine synthase TruA family. In terms of assembly, homodimer.

The catalysed reaction is uridine(38/39/40) in tRNA = pseudouridine(38/39/40) in tRNA. Functionally, formation of pseudouridine at positions 38, 39 and 40 in the anticodon stem and loop of transfer RNAs. In Borreliella burgdorferi (strain ZS7) (Borrelia burgdorferi), this protein is tRNA pseudouridine synthase A.